The chain runs to 305 residues: Acetaldehyde dehydrogenase (305 aa).

Residue 13–16 coordinates NAD(+); that stretch reads SGNI. Residue Cys-128 is the Acyl-thioester intermediate of the active site. Residues 159–167 and Asn-278 each bind NAD(+); that span reads SAGPGTRQN.

Belongs to the acetaldehyde dehydrogenase family.

The catalysed reaction is acetaldehyde + NAD(+) + CoA = acetyl-CoA + NADH + H(+). This Roseiflexus sp. (strain RS-1) protein is Acetaldehyde dehydrogenase.